Consider the following 490-residue polypeptide: Serine palmitoyltransferase 2 (490 aa).

Residues 10–30 (VDDVGYLPILFLYIAYAFIIF) form a helical membrane-spanning segment. N6-(pyridoxal phosphate)lysine is present on lysine 321.

This sequence belongs to the class-II pyridoxal-phosphate-dependent aminotransferase family. As to quaternary structure, forms a heterodimer with sptA. The cofactor is pyridoxal 5'-phosphate.

It localises to the endoplasmic reticulum membrane. It carries out the reaction L-serine + hexadecanoyl-CoA + H(+) = 3-oxosphinganine + CO2 + CoA. It functions in the pathway lipid metabolism; sphingolipid metabolism. Functionally, catalytic subunit of serine palmitoyltransferase (SPT), which catalyzes the committed step in the synthesis of sphingolipids, the condensation of serine with palmitoyl CoA to form the long chain base 3-ketosphinganine. This chain is Serine palmitoyltransferase 2 (sptB), found in Dictyostelium discoideum (Social amoeba).